Reading from the N-terminus, the 555-residue chain is Probable ferredoxin/ferredoxin--NADP reductase (555 aa).

4Fe-4S ferredoxin-type domains follow at residues 2–29 (PYII…PTPD) and 37–66 (EMLY…SDTR). Cysteine 9, cysteine 15, cysteine 19, cysteine 46, cysteine 49, cysteine 52, and cysteine 56 together coordinate [4Fe-4S] cluster. Positions 115-555 (VAIVGSGPAA…APPLRLRALS (441 aa)) are ferredoxin--NADP reductase. FAD-binding residues include alanine 123, glutamate 143, leucine 151, and isoleucine 187. NADP(+) contacts are provided by residues arginine 213, 258–261 (NGNV), 302–303 (RR), and glutamate 314. Residues tryptophan 453 and 460–462 (GFI) each bind FAD. Glycine 460 provides a ligand contact to NADP(+).

The protein in the C-terminal section; belongs to the ferredoxin--NADP reductase family. Requires [4Fe-4S] cluster as cofactor. The cofactor is FAD.

It carries out the reaction 2 reduced [2Fe-2S]-[ferredoxin] + NADP(+) + H(+) = 2 oxidized [2Fe-2S]-[ferredoxin] + NADPH. This chain is Probable ferredoxin/ferredoxin--NADP reductase (fprB), found in Mycobacterium leprae (strain TN).